Reading from the N-terminus, the 471-residue chain is Putative multidrug resistance protein MdtD (471 aa).

13 helical membrane-spanning segments follow: residues 12–32, 49–69, 77–97, 102–124, 138–158, 165–185, 197–217, 222–242, 263–283, 286–306, 342–362, 396–416, and 431–451; these read LWIVAFGFFMQSLDTTIVNTA, MVVVSYVLTVAVMLPASGWLA, IFFTAIVLFTLGSLFCAWSST, VLARVLQGVGGAMMVPVGRLTVM, FVTLPGQVGPLLGPALGGILV, WIFLINIPVGIVGAIATLMLM, LSGFLLLAVGMAVLTMALDGS, LSPLSLGALVLCGILAIALYL, FSLGLSGSFAGRVGSGMLPFM, VFLQIGLGFSPFHAGLMMIPM, LLFMSVAMLGWYYALPFVLFL, MIMQLSMSIGVTIAGLLLGMF, and VFMYTWLCMALIIALPALIFA.

It belongs to the major facilitator superfamily. TCR/Tet family.

Its subcellular location is the cell inner membrane. This is Putative multidrug resistance protein MdtD from Citrobacter koseri (strain ATCC BAA-895 / CDC 4225-83 / SGSC4696).